Here is a 564-residue protein sequence, read N- to C-terminus: MVLFIILAILVVILIAIGVLFYMRSNKRNLIEKTEERKNEIEQLPLDDNLRKLTGLNLKGETKTKYDAMKKDNTETTNKYLAPVEEKIQNAEELLEKFKFTAAQTEIDDAHELMDQYEENYQHQVTQVDDIINLHKENEALYEKCKVDYREMKRDVLANRHQFGEAAEPLENEIENYEPKLNEYENLKSEGNYVQAHNHIAALEDQIKNLKSYMDEIPELIRETQKELPGQFQDLKYGCRDLKVEGYDLDHVKVDGTIQSLKTELSFVEPMISRLELDEANNKLENINDKLDEMYDLIEYEVKAKNEVEETKDIITDDLFKAKDMNYTLQTEIEYVRENYYINESDAQSVRQFENEIQSLISVYDDILKETSKSAVRYSEVQDNLQYLEDHVSVINKEQDKLQNHLIQLREDEAEAEDNLLRVQSKKEEVYRRLLASNLTSVPERFIIMKNEIDNEVREVNEQFRERPIHVKQLKDKVAKIVIQMNTFEDEANDVLVNAVYAEKLIQYGNRYRKDHHHVDKSLNEAERLFKNNRYKRAIEIAEEALESVEPGITKHIEEQVIKE.

Residues 1 to 4 (MVLF) are Extracellular-facing. A helical transmembrane segment spans residues 5 to 23 (IILAILVVILIAIGVLFYM). The Cytoplasmic segment spans residues 24–564 (RSNKRNLIEK…KHIEEQVIKE (541 aa)). Coiled coils occupy residues 84 to 126 (VEEK…HQVT), 165 to 223 (EAAE…LIRE), 271 to 303 (MISRLELDEANNKLENINDKLDEMYDLIEYEVK), and 350 to 435 (VRQF…RRLL).

This sequence belongs to the EzrA family.

The protein resides in the cell membrane. Negative regulator of FtsZ ring formation; modulates the frequency and position of FtsZ ring formation. Inhibits FtsZ ring formation at polar sites. Interacts either with FtsZ or with one of its binding partners to promote depolymerization. The polypeptide is Septation ring formation regulator EzrA (Staphylococcus epidermidis (strain ATCC 12228 / FDA PCI 1200)).